The primary structure comprises 258 residues: uncharacterized protein (258 aa).

An N-terminal signal peptide occupies residues 1 to 19 (MRKIFLPLLLVALSPVAHS).

This is an uncharacterized protein from Escherichia coli (strain K12).